Consider the following 409-residue polypeptide: MSALGTLSGGAAGVSGLLRLRRRAAPAPAIAAPSHLPAGTVKCAAAVPDAAPIVWGRQLRPALLLPAALLPSLQPARRHTLQPPAAAAESAGEAKSVGFLEKYPALVTGFFFFMWYFLNVIFNILNKKIYNYFPYPYFVSLIHLVVGVVYCLISWSVGLPKRAPINGTLLKLLFPVALCHGIGHITSNVSFAAVAVSFAHTIKALEPFFSAAATQFILGQQVPFSLWLSLAPVVIGVSMASLTELSFNWTGFINAMISNISFTYRSIYSKKAMTDMDSTNVYAYISIIALIVCIPPALIFEGPKLMQHGFSDAIAKVGLTKFVSDLFLVGLFYHLYNQIATNTLERVAPLTHAVGNVLKRVFVIGFSIIVFGNKISTQTGIGTSIAIAGVAMYSYIKAKIEEEKRKKSA.

The N-terminal 85 residues, 1–85, are a transit peptide targeting the chloroplast; the sequence is MSALGTLSGG…ARRHTLQPPA (85 aa). Over 86–104 the chain is Chloroplast intermembrane; it reads AAAESAGEAKSVGFLEKYP. A helical transmembrane segment spans residues 105-125; sequence ALVTGFFFFMWYFLNVIFNIL. At 126–137 the chain is on the lumenal side; it reads NKKIYNYFPYPY. The chain crosses the membrane as a helical span at residues 138-158; it reads FVSLIHLVVGVVYCLISWSVG. The Chloroplast intermembrane portion of the chain corresponds to 159 to 215; sequence LPKRAPINGTLLKLLFPVALCHGIGHITSNVSFAAVAVSFAHTIKALEPFFSAAATQ. The helical transmembrane segment at 216 to 236 threads the bilayer; it reads FILGQQVPFSLWLSLAPVVIG. The Lumenal portion of the chain corresponds to 237–280; it reads VSMASLTELSFNWTGFINAMISNISFTYRSIYSKKAMTDMDSTN. The helical transmembrane segment at 281–300 threads the bilayer; that stretch reads VYAYISIIALIVCIPPALIF. Residues 301–378 are Chloroplast intermembrane-facing; the sequence is EGPKLMQHGF…IVFGNKISTQ (78 aa). A helical transmembrane segment spans residues 379 to 399; it reads TGIGTSIAIAGVAMYSYIKAK. The Lumenal portion of the chain corresponds to 400-409; sequence IEEEKRKKSA.

This sequence belongs to the TPT transporter family. TPT (TC 2.A.7.9) subfamily. Homodimer.

The protein resides in the plastid. It is found in the chloroplast membrane. In terms of biological role, mediates the export of fixed carbons from the chloroplasts into the cytosol in the form of triose phosphates. In addition, it can also bind and transport phosphoenolpyruvate, thereby increasing the photosynthetic efficiency of C4-plants. The protein is Triose phosphate/phosphate translocator, chloroplastic (TPT) of Zea mays (Maize).